We begin with the raw amino-acid sequence, 292 residues long: Acetyl-coenzyme A carboxylase carboxyl transferase subunit beta (292 aa).

Positions Leu29–Val292 constitute a CoA carboxyltransferase N-terminal domain. Residues Cys33, Cys36, Cys52, and Cys55 each contribute to the Zn(2+) site. The C4-type zinc-finger motif lies at Cys33–Cys55.

It belongs to the AccD/PCCB family. In terms of assembly, acetyl-CoA carboxylase is a heterohexamer composed of biotin carboxyl carrier protein (AccB), biotin carboxylase (AccC) and two subunits each of ACCase subunit alpha (AccA) and ACCase subunit beta (AccD). Zn(2+) serves as cofactor.

It localises to the cytoplasm. The enzyme catalyses N(6)-carboxybiotinyl-L-lysyl-[protein] + acetyl-CoA = N(6)-biotinyl-L-lysyl-[protein] + malonyl-CoA. Its pathway is lipid metabolism; malonyl-CoA biosynthesis; malonyl-CoA from acetyl-CoA: step 1/1. Functionally, component of the acetyl coenzyme A carboxylase (ACC) complex. Biotin carboxylase (BC) catalyzes the carboxylation of biotin on its carrier protein (BCCP) and then the CO(2) group is transferred by the transcarboxylase to acetyl-CoA to form malonyl-CoA. In Synechococcus sp. (strain WH7803), this protein is Acetyl-coenzyme A carboxylase carboxyl transferase subunit beta.